The chain runs to 427 residues: UDP-N-acetylglucosamine 1-carboxyvinyltransferase (427 aa).

A phosphoenolpyruvate-binding site is contributed by 22-23 (KN). Residue Arg-99 participates in UDP-N-acetyl-alpha-D-glucosamine binding. Catalysis depends on Cys-123, which acts as the Proton donor. Cys-123 is modified (2-(S-cysteinyl)pyruvic acid O-phosphothioketal). UDP-N-acetyl-alpha-D-glucosamine-binding positions include 128–132 (RPIDL), Asp-313, and Ile-335.

This sequence belongs to the EPSP synthase family. MurA subfamily.

It is found in the cytoplasm. It carries out the reaction phosphoenolpyruvate + UDP-N-acetyl-alpha-D-glucosamine = UDP-N-acetyl-3-O-(1-carboxyvinyl)-alpha-D-glucosamine + phosphate. Its pathway is cell wall biogenesis; peptidoglycan biosynthesis. Its function is as follows. Cell wall formation. Adds enolpyruvyl to UDP-N-acetylglucosamine. This Sphingopyxis alaskensis (strain DSM 13593 / LMG 18877 / RB2256) (Sphingomonas alaskensis) protein is UDP-N-acetylglucosamine 1-carboxyvinyltransferase.